The sequence spans 482 residues: MGSQETNLAPHVLIFPLPIQGHVNSMLRLAELLCLAELDITFIVSEFSHSRLIKHTNVASRFARYPGFQFQPISDGLPDDHPRAGERVMDILPSTKNVTGPLFKQMMVENKCFSSATRRPITCIIADGVLSFAGDFAQEKGIPLIYFRTVSACSFWACFCMPELIESGDIPIKGNGMDLIVKSVPGMETFLRRRDLPGFCRVNDINEPKLQILKTETRQTTRAQAAILNTFEDLEGPILSQIRKHMPRLFTIGPSHSHLTSRLETKNIKTLISSGSFWEEDRSCVDWLDAQPPRSVLYVSFGSITVVTRDQLLEFWYGLVNSGQRFLWVMRPDSIMGKDGQSQIPADLEEGTKARGYMVGWAPQEEVLNHPAIGGFLTHSGWNSTLESIVAGVPMICWPYFADQMINSRFVSEIWKIGLDMKDTCDRETIVKMVRELMEIRKDEFLQRADHMAKLAKEAVSEGGSSYSNLDGLVDYIKSLII.

His-22 acts as the Proton acceptor in catalysis. His-22 is a binding site for an anthocyanidin. Asp-127 (charge relay) is an active-site residue. The UDP-alpha-D-glucose site is built by Thr-149, Ala-362, Gln-364, His-379, Trp-382, Asn-383, Ser-384, and Glu-387. Ala-402 contributes to the an anthocyanidin binding site. Asp-403 and Gln-404 together coordinate UDP-alpha-D-glucose.

Belongs to the UDP-glycosyltransferase family. In terms of tissue distribution, expressed in leaves, roots and stems. Lower levels of expression in flowers. Preferentially expressed in internal phloem parenchyma cells.

The enzyme catalyses 7-deoxyloganetate + UDP-alpha-D-glucose = 7-deoxyloganate + UDP + H(+). Functionally, iridoid glucosyltransferase acting exclusively on 7-deoxyloganetic acid. No activity with 7-deoxyloganetin. Catalyzes the fourth to last step in secologanin biosynthesis. The sequence is that of 7-deoxyloganetic acid glucosyltransferase (UGT709C2) from Catharanthus roseus (Madagascar periwinkle).